The primary structure comprises 336 residues: UDP-3-O-acylglucosamine N-acyltransferase (336 aa).

Residue His-237 is the Proton acceptor of the active site.

This sequence belongs to the transferase hexapeptide repeat family. LpxD subfamily. In terms of assembly, homotrimer.

The enzyme catalyses a UDP-3-O-[(3R)-3-hydroxyacyl]-alpha-D-glucosamine + a (3R)-hydroxyacyl-[ACP] = a UDP-2-N,3-O-bis[(3R)-3-hydroxyacyl]-alpha-D-glucosamine + holo-[ACP] + H(+). Its pathway is bacterial outer membrane biogenesis; LPS lipid A biosynthesis. Catalyzes the N-acylation of UDP-3-O-acylglucosamine using 3-hydroxyacyl-ACP as the acyl donor. Is involved in the biosynthesis of lipid A, a phosphorylated glycolipid that anchors the lipopolysaccharide to the outer membrane of the cell. This chain is UDP-3-O-acylglucosamine N-acyltransferase, found in Alcanivorax borkumensis (strain ATCC 700651 / DSM 11573 / NCIMB 13689 / SK2).